We begin with the raw amino-acid sequence, 494 residues long: Ubiquitin carboxyl-terminal hydrolase 27 (494 aa).

Residues 30–50 traverse the membrane as a helical segment; the sequence is LSFAGLLGVAGFVFAQQHGLF. The region spanning 74–494 is the USP domain; sequence PGLQNLGNNC…EASLLFYERL (421 aa). Cysteine 83 acts as the Nucleophile in catalysis. Histidine 440 serves as the catalytic Proton acceptor.

This sequence belongs to the peptidase C19 family.

The protein resides in the membrane. It catalyses the reaction Thiol-dependent hydrolysis of ester, thioester, amide, peptide and isopeptide bonds formed by the C-terminal Gly of ubiquitin (a 76-residue protein attached to proteins as an intracellular targeting signal).. Recognizes and hydrolyzes the peptide bond at the C-terminal Gly of ubiquitin. Involved in the processing of poly-ubiquitin precursors as well as that of ubiquitinated proteins. The protein is Ubiquitin carboxyl-terminal hydrolase 27 (UBP27) of Arabidopsis thaliana (Mouse-ear cress).